The sequence spans 128 residues: uncharacterized protein (128 aa).

Positions 18–116 (CPVETTLDII…WGEKYKDRID (99 aa)) constitute an HTH hxlR-type domain.

This is an uncharacterized protein from Bacillus subtilis (strain 168).